The following is a 302-amino-acid chain: Sulfate adenylyltransferase subunit 2 (302 aa).

Residues 280–302 (RQGRVIDHDSSGSMEKKKREGYF) are disordered.

The protein belongs to the PAPS reductase family. CysD subfamily. In terms of assembly, heterodimer composed of CysD, the smaller subunit, and CysN.

It carries out the reaction sulfate + ATP + H(+) = adenosine 5'-phosphosulfate + diphosphate. The protein operates within sulfur metabolism; hydrogen sulfide biosynthesis; sulfite from sulfate: step 1/3. In terms of biological role, with CysN forms the ATP sulfurylase (ATPS) that catalyzes the adenylation of sulfate producing adenosine 5'-phosphosulfate (APS) and diphosphate, the first enzymatic step in sulfur assimilation pathway. APS synthesis involves the formation of a high-energy phosphoric-sulfuric acid anhydride bond driven by GTP hydrolysis by CysN coupled to ATP hydrolysis by CysD. The sequence is that of Sulfate adenylyltransferase subunit 2 from Shewanella amazonensis (strain ATCC BAA-1098 / SB2B).